Here is a 295-residue protein sequence, read N- to C-terminus: Carbapenem-hydrolyzing beta-lactamase transcriptional activator (295 aa).

One can recognise an HTH lysR-type domain in the interval leucine 5–threonine 62. Positions phenylalanine 22–arginine 41 form a DNA-binding region, H-T-H motif.

It belongs to the LysR transcriptional regulatory family.

Its function is as follows. This protein is a positive regulator of gene expression of carbapenem-hydrolyzing beta-lactamase (NmcA). The sequence is that of Carbapenem-hydrolyzing beta-lactamase transcriptional activator (nmcR) from Enterobacter cloacae.